The chain runs to 537 residues: Serendipity locus protein alpha (537 aa).

Its subcellular location is the cytoplasm. It localises to the cell membrane. Required for the cellularization of the syncytial blastoderm embryo. Involved in the localization of the actin filaments just prior to and during plasma membrane invagination. Sry-alpha together with nullo and bnk may provide auxiliary functions, by acting both to stabilize a large and dynamic microfilament structure and regulate its functions. This is Serendipity locus protein alpha (Sry-alpha) from Drosophila virilis (Fruit fly).